A 455-amino-acid chain; its full sequence is Protein 60A (455 aa).

Positions 1–36 (MSGLRNTSEAVAVLASLGLGMVLLMFVATTPPAVEA) are cleaved as a signal peptide. A propeptide spanning residues 37–335 (TQSGIYIDNG…SASHPRKRKK (299 aa)) is cleaved from the precursor. Positions 108 to 118 (GLSDQDEDDDY) are enriched in acidic residues. Residues 108–138 (GLSDQDEDDDYERGHRSRRSADLEEDEGEQQ) are disordered. N-linked (GlcNAc...) asparagine glycosylation is found at asparagine 238 and asparagine 250. Positions 316–345 (AHSSHHRSKRSASHPRKRKKSVSPNNVPLL) are disordered. Positions 318-336 (SSHHRSKRSASHPRKRKKS) are enriched in basic residues. Disulfide bonds link cysteine 354–cysteine 420, cysteine 383–cysteine 452, and cysteine 387–cysteine 454. A glycan (N-linked (GlcNAc...) asparagine) is linked at asparagine 396.

The protein belongs to the TGF-beta family. In terms of assembly, homodimer; disulfide-linked. Interacts with nord and dpp. Expressed in cells of the developing foregut and hindgut during germ band retraction and later embryonic stages. Expressed in the wing disk, mainly in the posterior compartment in the pteropleural and medial regions extending into the progenitors of the scutellum. High levels are found within the posterior and anterior compartments of the wing pouch and low levels in the hinge region. In the eye/antennal disk, expression is highest anterior to the morphogenetic furrow and in the medial regions with lower levels of expression posterior to the morphogenetic furrow. Expressed throughout the posterior compartment of the leg imaginal disks and within the ventral anterior compartment.

Its subcellular location is the secreted. Functionally, required for the growth of imaginal tissues and for patterning of the adult wing. The polypeptide is Protein 60A (gbb) (Drosophila melanogaster (Fruit fly)).